The following is a 150-amino-acid chain: Cytochrome c oxidase subunit 5A, mitochondrial (150 aa).

A mitochondrion-targeting transit peptide spans 1–41; sequence MLGAALRRCAVAATTRAGPRGLLHSARTPGPAAAIQSVRCY. Positions 2–17 match the SIFI-degron motif; it reads LGAALRRCAVAATTRA. 2 positions are modified to N6-acetyllysine: lysine 87 and lysine 113. A Phosphothreonine modification is found at threonine 141.

It belongs to the cytochrome c oxidase subunit 5A family. As to quaternary structure, component of the cytochrome c oxidase (complex IV, CIV), a multisubunit enzyme composed of 14 subunits. The complex is composed of a catalytic core of 3 subunits MT-CO1, MT-CO2 and MT-CO3, encoded in the mitochondrial DNA, and 11 supernumerary subunits COX4I, COX5A, COX5B, COX6A, COX6B, COX6C, COX7A, COX7B, COX7C, COX8 and NDUFA4, which are encoded in the nuclear genome. The complex exists as a monomer or a dimer and forms supercomplexes (SCs) in the inner mitochondrial membrane with NADH-ubiquinone oxidoreductase (complex I, CI) and ubiquinol-cytochrome c oxidoreductase (cytochrome b-c1 complex, complex III, CIII), resulting in different assemblies (supercomplex SCI(1)III(2)IV(1) and megacomplex MCI(2)III(2)IV(2)). Interacts with AFG1L. Interacts with RAB5IF. Post-translationally, in response to mitochondrial stress, the precursor protein is ubiquitinated by the SIFI complex in the cytoplasm before mitochondrial import, leading to its degradation. Within the SIFI complex, UBR4 initiates ubiquitin chain that are further elongated or branched by KCMF1.

It is found in the mitochondrion inner membrane. Its pathway is energy metabolism; oxidative phosphorylation. Its function is as follows. Component of the cytochrome c oxidase, the last enzyme in the mitochondrial electron transport chain which drives oxidative phosphorylation. The respiratory chain contains 3 multisubunit complexes succinate dehydrogenase (complex II, CII), ubiquinol-cytochrome c oxidoreductase (cytochrome b-c1 complex, complex III, CIII) and cytochrome c oxidase (complex IV, CIV), that cooperate to transfer electrons derived from NADH and succinate to molecular oxygen, creating an electrochemical gradient over the inner membrane that drives transmembrane transport and the ATP synthase. Cytochrome c oxidase is the component of the respiratory chain that catalyzes the reduction of oxygen to water. Electrons originating from reduced cytochrome c in the intermembrane space (IMS) are transferred via the dinuclear copper A center (CU(A)) of subunit 2 and heme A of subunit 1 to the active site in subunit 1, a binuclear center (BNC) formed by heme A3 and copper B (CU(B)). The BNC reduces molecular oxygen to 2 water molecules using 4 electrons from cytochrome c in the IMS and 4 protons from the mitochondrial matrix. The sequence is that of Cytochrome c oxidase subunit 5A, mitochondrial (COX5A) from Pan troglodytes (Chimpanzee).